Reading from the N-terminus, the 618-residue chain is Glutamine--fructose-6-phosphate aminotransferase [isomerizing] (618 aa).

Cys2 serves as the catalytic Nucleophile; for GATase activity. The Glutamine amidotransferase type-2 domain maps to 2–226 (CGIVGYAGRN…DFETAVLSPT (225 aa)). The disordered stretch occupies residues 69-94 (HTRWATHGRPSTKNAHPHNSGGNPGK). SIS domains follow at residues 295 to 434 (SEDE…VRDR) and 467 to 608 (CAEG…IDKP). Lys613 serves as the catalytic For Fru-6P isomerization activity.

Homodimer.

The protein resides in the cytoplasm. The enzyme catalyses D-fructose 6-phosphate + L-glutamine = D-glucosamine 6-phosphate + L-glutamate. Its function is as follows. Catalyzes the first step in hexosamine metabolism, converting fructose-6P into glucosamine-6P using glutamine as a nitrogen source. The protein is Glutamine--fructose-6-phosphate aminotransferase [isomerizing] of Methanosarcina acetivorans (strain ATCC 35395 / DSM 2834 / JCM 12185 / C2A).